A 1635-amino-acid chain; its full sequence is MATAGGSGQPLCSGPPARTSALPAKKEFDVDTLSKAELRMLLSVMEGELEARDVVIEALRARRKEVFIQERYGRFNLNDPFLALQRDYEAGAGEAEKKPVCTNPLSILEAVMAHCRKMQERMSAQLAAAESRQKKLEMEKSQLHVLQQEHRKLSARLEDERGKNKQVVLMLVKECKQLSSKVGEEGEKLEEAASKLDAEKRKTGELEGALSAERQKSSQMEARMEKQLSEFDTEREQLRAKLSREEALTADLREEIDKMRKTIEQLRKGNDHKPSLSLPRGKAKDRRSVSVSVGTEGPASRAAACQTDPVVEGADPVKKPPVAVPAKPSSAGPLASGTTKGGVGKPSVGRQFSHGDLLTSSSPSIPGPPRIQENGPSSGSTPEPTGSALMPLLNNAPPPAASQNHSLTSSTPNLHSPCANAASYPALNPRVQAARFRFQGNANDQDQNGNTTQSPPSREVSPTSRDNLVVRQLARNTVTQALSRFTGPQAGAPASPRAPHPGEGGTGPPSGGRASAKTPNAPRVDRGNPPPIPPKKPGLSQTPSPPHPQLKVLKDSGRPANAGAKVDSKTGVPPPSAPPHGIRVMNEENLAKSSSPQPPPKPAGDLAPAVPAGCALPAVAASQVGACLGCNPGPSQPACSESSHAIPTAIACSSSINPVSASSCAPWASHSLLVAASGWPPSLTPLLTSCGPVSLGGRPTRLHQAAAQGNVTLLSVLLNEEGLDINHACEDGSSALYSAAKNGHTDCVRLLLNANAQVDDADKNGFTPLCSAAAQGHVKCAELLIAYHADINHAAEGGQTPLYLACKNGNNECIKLLLEAGTDRSITTSDGWTPVHAAVDSGNVDSLTLLMYYGGPESENSGSKDQTGLGSREESRGAMPVISADLINQADKEGWTAAHIAASKGLKNCLEILCGHGRLEAERKDKCDRTAHDVATDDCKHLLENLNALKISVRISVGEKQPAVCGSDDFEAENTICALNIRKQTSWDDFSKAVSQAVTNHFQAISSDGWKRLEDLTFNNATESSVGLSVSSILSVKLGSVTWSTGQSFSQPPWDFLQKNKVEHVTVFLSGPQEGCLSSVTYASMIPLQMLQNYLRLVEQYHNVVFHGPEGSLQDYIAHQIALCLKHKQTAAGFPCEIVKAEVDTNFSKEQLVELFINSACLIPVKQPPVSKKVIVILENLEKASLSELLGDFLAPLENRSSENPYTFQKGNGVANSYYFHENCFLVGTIAKSCLQGSDLLVQQHFRWVQLRWDGEPIHGLLQRFLRRKVMNKFRGKVPSPCDPVCKIIDWILTVWHQLNSCLSRLGTPEALIGPRYFLSCPVVPGHAHVTVKWMSKLWNAVIAPKVQEAILSRASVKRPAVRPSPSQGQQAVVKAALSILLNKAILHGCPLPRAELDQYMAEFRSGCFPLSMVSSYSGSHRKKGESGSWRKVNTSPRKKSGLSSSQTWTKQEATKDGVRNDTGHQNGNSIASLVKQKSLENGHPQVLHLDQRLSLGSDDEVDLVRELQSMCSSKSESDISKIADSKDDFRMFGSSRTDPDPEFSPTMSDRSLPSSEKEVCPLSSNPTLECSNNTPKPESGVSRVKSFLPVPRNKVAQCSPNPKRSNSSSSSNTRQREINNNLKEEFWVLRKNIQ.

4 disordered regions span residues M1–S20, A193–Q219, E264–V469, and S483–I582. The stretch at R116 to K273 forms a coiled coil. Composition is skewed to basic and acidic residues over residues A193–E205 and E264–P274. Composition is skewed to low complexity over residues P320–A331 and G375–N395. Over residues S402–L414 the composition is skewed to polar residues. The span at Q439 to Q453 shows a compositional bias: low complexity. Residues S454–D466 are compositionally biased toward polar residues. Position 484 is an asymmetric dimethylarginine (R484). ANK repeat units follow at residues G697 to H727, D731 to D760, N764 to H793, G797 to I826, D830 to E859, and E893 to R923. The disordered stretch occupies residues P856–R876. The span at S858–L869 shows a compositional bias: polar residues. The disordered stretch occupies residues S1420–N1469. Over residues K1432–Q1452 the composition is skewed to polar residues. Positions E1453–T1463 are enriched in basic and acidic residues. S1498 carries the phosphoserine modification. Positions R1531–K1624 are disordered. Composition is skewed to polar residues over residues P1546–S1555 and L1563–K1577. The span at R1615 to K1624 shows a compositional bias: basic and acidic residues.

As to quaternary structure, interacts with CTTN/cortactin SH3 domain. Interacts with STRN, STRN4/zinedin and MOB4/phocein; this interactions mediate the association with the STRIPAK core complex and may regulate dendritic spine distribution of the STRIPAK complex in hippocampal neurons. Activation of glutamate receptors weakens the interaction with STRN and STRN4.

The protein resides in the cytoplasm. Its subcellular location is the cell cortex. It is found in the cell projection. It localises to the dendritic spine. In terms of biological role, regulates the dendritic spine distribution of CTTN/cortactin in hippocampal neurons, and thus controls dendritic spinogenesis and dendritic spine maintenance. Associates with the striatin-interacting phosphatase and kinase (STRIPAK) core complex to regulate dendritic spine distribution of the STRIPAK complex in hippocampal neurons. This is Cortactin-binding protein 2 (CTTNBP2) from Ornithorhynchus anatinus (Duckbill platypus).